The primary structure comprises 1163 residues: GTPase-activating protein (1163 aa).

2 consecutive C2 domains span residues 26-148 and 261-419; these read PSSN…DHWF and TTST…SAWY. A Ras-GAP domain is found at 520 to 737; sequence ERIAPIIKAL…DAVKHFLEVI (218 aa). The 99-residue stretch at 762-860 folds into the PH domain; sequence LKEGLMTKYP…WFDLLHKICL (99 aa). The segment at 862 to 898 adopts a Btk-type zinc-finger fold; that stretch reads NSIRMQYFHPSAFVSGFYSCCGRSDENSPGCKKVLDK. His-870, Cys-881, Cys-882, and Cys-892 together coordinate Zn(2+). Disordered stretches follow at residues 1026 to 1051 and 1091 to 1163; these read LNQQ…LQQF and PFHQ…PPIY. Low complexity predominate over residues 1091–1157; it reads PFHQQQQQHH…APPSTTSSSQ (67 aa).

In terms of assembly, interacts with sty. As to expression, in third instar larvae eye imaginal disk, expressed in cells posterior to the morphogenetic furrow, in all photoreceptor and cone cell precursors as well as in still uncommitted cells.

Functionally, inhibitory regulator of the Ras-cyclic AMP pathway. May function as a negative regulator of Ras85D/Ras1 in the sev signaling pathway. Acts cell autonomously in cone cell precursors as a negative regulator of R7 photoreceptor cell determination. The polypeptide is GTPase-activating protein (RasGAP1) (Drosophila melanogaster (Fruit fly)).